Consider the following 105-residue polypeptide: uncharacterized protein (105 aa).

Residues 22 to 105 (GSAGHGATEA…KKRIIKGKVM (84 aa)) are disordered. A compositionally biased stretch (basic and acidic residues) spans 61-83 (HDSRPARGDARKRHCQENNKTDR). Residues 93 to 105 (NRRKKRIIKGKVM) are compositionally biased toward basic residues.

This is an uncharacterized protein from Escherichia coli (strain K12).